A 561-amino-acid chain; its full sequence is 3-hydroxy-3-methylglutaryl-coenzyme A reductase 3 (561 aa).

2 helical membrane-spanning segments follow: residues 25 to 45 (PIRHTNLIFSALFAASLAYLM) and 69 to 89 (IFGLVASLIYLLSFFGIAFVQ). A linker region spans residues 90–145 (SIVSSSDDEEEDFLVGPARGSSAAAAVAPPPPPSSPAQCSLLGSPHDDAARERMPE). The interval 113-146 (AAAVAPPPPPSSPAQCSLLGSPHDDAARERMPEE) is disordered. Positions 134–143 (PHDDAARERM) are enriched in basic and acidic residues. Residues 146–561 (EDEEIVSSVV…SSKDMSKVIS (416 aa)) form a catalytic region. Catalysis depends on E240, which acts as the Charge relay system. Residue N304 is glycosylated (N-linked (GlcNAc...) asparagine). Residues K372 and D448 each act as charge relay system in the active site. H546 serves as the catalytic Proton donor. N550 is a glycosylation site (N-linked (GlcNAc...) asparagine).

The protein belongs to the HMG-CoA reductase family.

The protein localises to the endoplasmic reticulum membrane. The catalysed reaction is (R)-mevalonate + 2 NADP(+) + CoA = (3S)-3-hydroxy-3-methylglutaryl-CoA + 2 NADPH + 2 H(+). The protein operates within metabolic intermediate biosynthesis; (R)-mevalonate biosynthesis; (R)-mevalonate from acetyl-CoA: step 3/3. Functionally, catalyzes the synthesis of mevalonate. The specific precursor of all isoprenoid compounds present in plants. The chain is 3-hydroxy-3-methylglutaryl-coenzyme A reductase 3 (HMG3) from Oryza sativa subsp. japonica (Rice).